The sequence spans 208 residues: Uracil phosphoribosyltransferase (208 aa).

Residues R78, R103, and 130–138 (DPMLATGGS) each bind 5-phospho-alpha-D-ribose 1-diphosphate. Residues I193 and 198–200 (GDA) each bind uracil. Residue D199 participates in 5-phospho-alpha-D-ribose 1-diphosphate binding.

It belongs to the UPRTase family. Mg(2+) is required as a cofactor.

The enzyme catalyses UMP + diphosphate = 5-phospho-alpha-D-ribose 1-diphosphate + uracil. It participates in pyrimidine metabolism; UMP biosynthesis via salvage pathway; UMP from uracil: step 1/1. Allosterically activated by GTP. Its function is as follows. Catalyzes the conversion of uracil and 5-phospho-alpha-D-ribose 1-diphosphate (PRPP) to UMP and diphosphate. This is Uracil phosphoribosyltransferase from Haemophilus influenzae (strain PittEE).